A 381-amino-acid chain; its full sequence is Subtilisin amylosacchariticus (381 aa).

The signal sequence occupies residues 1–29 (MRSKKLWISLLFALTLIFTMAFSNMSAQA). The propeptide occupies 30–106 (AGKSSTEKKY…VEEDHIAHEY (77 aa)). In terms of domain architecture, Inhibitor I9 spans 38 to 103 (KYIVGFKQTM…VAYVEEDHIA (66 aa)). Position 108 (glutamine 108) interacts with Ca(2+). Positions 111 to 380 (PYGISQIKAP…KGLINVQAAA (270 aa)) constitute a Peptidase S8 domain. The Charge relay system role is filled by aspartate 138. Aspartate 147 contacts Ca(2+). Histidine 170 (charge relay system) is an active-site residue. Ca(2+) is bound by residues leucine 181, asparagine 183, isoleucine 185, valine 187, alanine 275, tyrosine 277, and threonine 280. Serine 327 acts as the Charge relay system in catalysis.

The protein belongs to the peptidase S8 family. Ca(2+) serves as cofactor.

The protein resides in the secreted. The enzyme catalyses Hydrolysis of proteins with broad specificity for peptide bonds, and a preference for a large uncharged residue in P1. Hydrolyzes peptide amides.. In terms of biological role, subtilisin is an extracellular alkaline serine protease, it catalyzes the hydrolysis of proteins and peptide amides. The polypeptide is Subtilisin amylosacchariticus (apr) (Bacillus subtilis subsp. amylosacchariticus).